The sequence spans 283 residues: MRTQWPSPAKLNLFLYITGQRADGYHTLQTLFQFLDYGDTISIELRDNGDIRLLTPVEGVEHEDNLIVRAARLLMKTAADSGRLPTGSGANISIDKRLPMGGGLGGGSSNAATVLVALNHLWQCGLSMDELAEMGLTLGADVPVFVRGHAAFAEGVGEILTPVDPPEKWYLVAHPGVSIPTPVIFKDPELPRNTPKRSIETLLKCEFSNDCEVIARKRFREVDAVLSWLLEYAPSRLTGTGACVFAEFDTESEARQVLEQAPEWLNGFVAKGVNLSPLHRAML.

Lys-10 is a catalytic residue. 99–109 (PMGGGLGGGSS) is a binding site for ATP. Asp-141 is a catalytic residue.

The protein belongs to the GHMP kinase family. IspE subfamily. In terms of assembly, homodimer.

The enzyme catalyses 4-CDP-2-C-methyl-D-erythritol + ATP = 4-CDP-2-C-methyl-D-erythritol 2-phosphate + ADP + H(+). Its pathway is isoprenoid biosynthesis; isopentenyl diphosphate biosynthesis via DXP pathway; isopentenyl diphosphate from 1-deoxy-D-xylulose 5-phosphate: step 3/6. In terms of biological role, catalyzes the phosphorylation of the position 2 hydroxy group of 4-diphosphocytidyl-2C-methyl-D-erythritol. This is 4-diphosphocytidyl-2-C-methyl-D-erythritol kinase from Shigella dysenteriae serotype 1 (strain Sd197).